Reading from the N-terminus, the 2073-residue chain is Histone acetyltransferase KAT6B (2073 aa).

One can recognise an SAMD1-like winged helix (WH) domain in the interval 1–77; the sequence is MVKLANPLYT…LASYKDPDNP (77 aa). Residues 72 to 97 form a disordered region; it reads KDPDNPGRFSSVKPGTFPKSAKGSRG. The H15 domain occupies 103–176; sequence RNVDWNKLLR…KDGPQYRVNY (74 aa). 2 PHD-type zinc fingers span residues 213–272 and 269–320; these read IPIC…CKTC and CKTC…CRPK. Residue Ser355 is modified to Phosphoserine. 4 disordered regions span residues 360 to 409, 442 to 531, 553 to 583, and 639 to 663; these read EGSM…RPGA, FTPS…VPSL, TQGQSRKKGHPSYAPPKRMRRKTELSSTAKS, and VTPQMGTPSPGKGSLTDGRIKPDQD. Residues 361–717 are negatively regulates HAT activity; sequence GSMNAFTGRG…ECESGVEDCG (357 aa). A compositionally biased stretch (polar residues) spans 379-399; it reads KVCTTPSSGHAASGKDSSSRL. Residues 447–460 show a composition bias toward basic and acidic residues; that stretch reads DGRRSRGEIIDFSK. Residues 470-485 show a composition bias toward polar residues; the sequence is QKQSCTSHVLATGTTQ. Positions 488-499 are enriched in pro residues; sequence KPPPSSLPPPTP. The span at 501 to 531 shows a compositional bias: low complexity; it reads SGQSPSSQKSSTATSSPSPQSSSSQCSVPSL. Position 647 is a phosphoserine (Ser647). Lys673 is covalently cross-linked (Glycyl lysine isopeptide (Lys-Gly) (interchain with G-Cter in SUMO2)). The region spanning 715–989 is the MYST-type HAT domain; the sequence is DCGRYPSVIE…LDPDSLRWTP (275 aa). Positions 718–1008 are catalytic; the sequence is RYPSVIEFGK…EEEREAEKEA (291 aa). The C2HC MYST-type zinc finger occupies 748-773; that stretch reads LYLCEFCLKYMKSKNILLRHSKKCGW. Residues 752–1008 form an interaction with BRPF1 region; sequence EFCLKYMKSK…EEEREAEKEA (257 aa). Position 815 is an N6-acetyllysine; by autocatalysis (Lys815). Acetyl-CoA contacts are provided by residues 856–860 and 865–871; these read SCIMI and QRQGFGR. The Proton donor/acceptor role is filled by Glu891. Ser895 is a binding site for acetyl-CoA. 3 disordered regions span residues 1022-1452, 1484-1538, and 1580-1619; these read EQEI…FKEV, SCNS…MEID, and QSPQIATTLDDCQQSDHSSPVSSVHSHPGQSVRSVNSPSV. The segment covering 1025-1043 has biased composition (polar residues); it reads ILSTRANSRQSPAKVQSKN. Residues Lys1038, Lys1042, and Lys1044 each carry the N6-acetyllysine modification. Phosphoserine is present on Ser1048. Residues 1069–1105 show a composition bias toward acidic residues; the sequence is SEEEEEEEDEEEEEEEEEEEEDEEEEEEEEEEEEEEN. Polar residues predominate over residues 1106–1117; the sequence is IQSSPPRLTKPQ. The segment covering 1121 to 1140 has biased composition (basic residues); sequence IKRKRPFVLKKKRGRKRRRI. Low complexity predominate over residues 1142 to 1155; that stretch reads SSVTTETISETTEV. Over residues 1187–1200 the composition is skewed to basic residues; that stretch reads PVLRKAFQHQPGKK. Composition is skewed to basic and acidic residues over residues 1229–1243, 1306–1315, and 1341–1350; these read SNLKEGSKDNPEPLK, RIEEEVKETG, and EKPEDDLIKP. Positions 1351–1374 are enriched in acidic residues; sequence EEEEEEEEEEEEEEEEEEGEEEEG. 2 stretches are compositionally biased toward basic and acidic residues: residues 1378 to 1390 and 1396 to 1407; these read VEKDPDGAKSQEK and STEKEDSARLDD. The segment covering 1408 to 1417 has biased composition (acidic residues); it reads HEEEEEEDEE. Basic and acidic residues predominate over residues 1433–1452; the sequence is HMESAEVEKEELPRESFKEV. Positions 1498–1507 are enriched in acidic residues; that stretch reads AVPESDEEPP. Positions 1513–1529 are enriched in basic and acidic residues; the sequence is QKQDQKNSKEVDTEFKE. The tract at residues 1560-2073 is interaction with RUNX1 and RUNX2; the sequence is QDCAETQEAC…QSLNGSYMRR (514 aa). The span at 1580 to 1591 shows a compositional bias: polar residues; sequence QSPQIATTLDDC. A compositionally biased stretch (low complexity) spans 1594–1611; that stretch reads SDHSSPVSSVHSHPGQSV.

It belongs to the MYST (SAS/MOZ) family. As to quaternary structure, component of the MOZ/MORF complex composed at least of ING5, KAT6A, KAT6B, MEAF6 and one of BRPF1, BRD1/BRPF2 and BRPF3. Interacts with RUNX1 and RUNX2. In terms of processing, autoacetylated. Autoacetylation at Lys-815 is required for proper function. In terms of tissue distribution, ubiquitously expressed, with high levels in heart, pancreas, testis and ovary.

The protein resides in the nucleus. It catalyses the reaction L-lysyl-[protein] + acetyl-CoA = N(6)-acetyl-L-lysyl-[protein] + CoA + H(+). Histone acetyltransferase which may be involved in both positive and negative regulation of transcription. Required for RUNX2-dependent transcriptional activation. May be involved in cerebral cortex development. Component of the MOZ/MORF complex which has a histone H3 acetyltransferase activity. The sequence is that of Histone acetyltransferase KAT6B (KAT6B) from Homo sapiens (Human).